The primary structure comprises 113 residues: uncharacterized protein (113 aa).

An N-terminal signal peptide occupies residues 1-38 (MVKIERKATDSAYHEFTKILTSSAQLMAFLNQSDFVKA).

This is an uncharacterized protein from Haemophilus influenzae (strain ATCC 51907 / DSM 11121 / KW20 / Rd).